The primary structure comprises 595 residues: Elongation factor 4 (595 aa).

Positions 2-184 (SHIRNFSIIA…RLVATIPAPT (183 aa)) constitute a tr-type G domain. Residues 14 to 19 (DHGKST) and 131 to 134 (NKMD) each bind GTP.

It belongs to the TRAFAC class translation factor GTPase superfamily. Classic translation factor GTPase family. LepA subfamily.

Its subcellular location is the cell inner membrane. The enzyme catalyses GTP + H2O = GDP + phosphate + H(+). In terms of biological role, required for accurate and efficient protein synthesis under certain stress conditions. May act as a fidelity factor of the translation reaction, by catalyzing a one-codon backward translocation of tRNAs on improperly translocated ribosomes. Back-translocation proceeds from a post-translocation (POST) complex to a pre-translocation (PRE) complex, thus giving elongation factor G a second chance to translocate the tRNAs correctly. Binds to ribosomes in a GTP-dependent manner. This Pseudomonas savastanoi pv. phaseolicola (strain 1448A / Race 6) (Pseudomonas syringae pv. phaseolicola (strain 1448A / Race 6)) protein is Elongation factor 4.